The primary structure comprises 250 residues: Leucyl/phenylalanyl-tRNA--protein transferase (250 aa).

This sequence belongs to the L/F-transferase family.

It is found in the cytoplasm. The enzyme catalyses N-terminal L-lysyl-[protein] + L-leucyl-tRNA(Leu) = N-terminal L-leucyl-L-lysyl-[protein] + tRNA(Leu) + H(+). The catalysed reaction is N-terminal L-arginyl-[protein] + L-leucyl-tRNA(Leu) = N-terminal L-leucyl-L-arginyl-[protein] + tRNA(Leu) + H(+). It carries out the reaction L-phenylalanyl-tRNA(Phe) + an N-terminal L-alpha-aminoacyl-[protein] = an N-terminal L-phenylalanyl-L-alpha-aminoacyl-[protein] + tRNA(Phe). Functions in the N-end rule pathway of protein degradation where it conjugates Leu, Phe and, less efficiently, Met from aminoacyl-tRNAs to the N-termini of proteins containing an N-terminal arginine or lysine. The protein is Leucyl/phenylalanyl-tRNA--protein transferase of Cupriavidus necator (strain ATCC 17699 / DSM 428 / KCTC 22496 / NCIMB 10442 / H16 / Stanier 337) (Ralstonia eutropha).